The primary structure comprises 392 residues: Pannexin-3 (392 aa).

Residues Met-1–Lys-39 are Cytoplasmic-facing. A helical transmembrane segment spans residues Phe-40–Ser-60. Over Gly-61 to Ser-113 the chain is Extracellular. Asn-71 is a glycosylation site (N-linked (GlcNAc...) asparagine). The helical transmembrane segment at Leu-114–Pro-134 threads the bilayer. Residues Ala-135 to Leu-215 lie on the Cytoplasmic side of the membrane. Residues Leu-216–Phe-236 traverse the membrane as a helical segment. Residues Gln-237–Ser-267 lie on the Extracellular side of the membrane. Residues Ile-268 to Ile-288 traverse the membrane as a helical segment. The Cytoplasmic segment spans residues Tyr-289 to Pro-392.

It belongs to the pannexin family. Homoheptameric.

It localises to the cell membrane. The protein resides in the cell junction. Its subcellular location is the gap junction. It is found in the endoplasmic reticulum membrane. It carries out the reaction Ca(2+)(in) = Ca(2+)(out). The enzyme catalyses ATP(in) = ATP(out). Regulator of osteoblast differentiation by functionning as a Ca(2+) channel in the endoplasmic reticulum which regulates calmodulin (CaM) pathways. Allows ATP release into the extracellular space and activation or purinergic receptors. This is Pannexin-3 from Homo sapiens (Human).